Here is a 245-residue protein sequence, read N- to C-terminus: 8-amino-3,8-dideoxy-manno-octulosonate cytidylyltransferase (245 aa).

It belongs to the KdsB family.

It localises to the cytoplasm. It catalyses the reaction 8-amino-3,8-dideoxy-alpha-D-manno-octulosonate + CTP = CMP-8-amino-3,8-dideoxy-alpha-D-manno-oct-2-ulosonate + diphosphate. The protein operates within bacterial outer membrane biogenesis; lipopolysaccharide biosynthesis. In terms of biological role, activates KDO8N (a required 8-carbon sugar) for incorporation into bacterial lipopolysaccharide in the Shewanella genus. The protein is 8-amino-3,8-dideoxy-manno-octulosonate cytidylyltransferase of Shewanella putrefaciens (strain CN-32 / ATCC BAA-453).